A 354-amino-acid chain; its full sequence is Threonine synthase (354 aa).

Lysine 61 is subject to N6-(pyridoxal phosphate)lysine. Residues asparagine 87, 187-191 (GNAGN), and threonine 316 contribute to the pyridoxal 5'-phosphate site.

It belongs to the threonine synthase family. Requires pyridoxal 5'-phosphate as cofactor.

The catalysed reaction is O-phospho-L-homoserine + H2O = L-threonine + phosphate. It functions in the pathway amino-acid biosynthesis; L-threonine biosynthesis; L-threonine from L-aspartate: step 5/5. Functionally, catalyzes the gamma-elimination of phosphate from L-phosphohomoserine and the beta-addition of water to produce L-threonine. The sequence is that of Threonine synthase (thrC) from Halalkalibacterium halodurans (strain ATCC BAA-125 / DSM 18197 / FERM 7344 / JCM 9153 / C-125) (Bacillus halodurans).